Reading from the N-terminus, the 414-residue chain is Secernin-1 (414 aa).

Ala2 is modified (N-acetylalanine). Cys9 is an active-site residue.

It belongs to the peptidase C69 family. Secernin subfamily.

The protein localises to the cytoplasm. In terms of biological role, regulates exocytosis in mast cells. Increases both the extent of secretion and the sensitivity of mast cells to stimulation with calcium. This Homo sapiens (Human) protein is Secernin-1 (SCRN1).